The following is a 284-amino-acid chain: D-tagatose-1,6-bisphosphate aldolase subunit GatY (284 aa).

Catalysis depends on Asp82, which acts as the Proton donor. Zn(2+)-binding residues include His83 and His180. Gly181 lines the dihydroxyacetone phosphate pocket. Zn(2+) is bound at residue His208. Dihydroxyacetone phosphate contacts are provided by residues 209 to 211 (GAS) and 230 to 233 (NVAT).

The protein belongs to the class II fructose-bisphosphate aldolase family. TagBP aldolase GatY subfamily. In terms of assembly, forms a complex with GatZ. Zn(2+) is required as a cofactor.

It catalyses the reaction D-tagatofuranose 1,6-bisphosphate = D-glyceraldehyde 3-phosphate + dihydroxyacetone phosphate. The protein operates within carbohydrate metabolism; D-tagatose 6-phosphate degradation; D-glyceraldehyde 3-phosphate and glycerone phosphate from D-tagatose 6-phosphate: step 2/2. In terms of biological role, catalytic subunit of the tagatose-1,6-bisphosphate aldolase GatYZ, which catalyzes the reversible aldol condensation of dihydroxyacetone phosphate (DHAP or glycerone-phosphate) with glyceraldehyde 3-phosphate (G3P) to produce tagatose 1,6-bisphosphate (TBP). Requires GatZ subunit for full activity and stability. Is involved in the catabolism of galactitol. This is D-tagatose-1,6-bisphosphate aldolase subunit GatY (gatY) from Escherichia coli.